Consider the following 398-residue polypeptide: Acetate kinase 1 (398 aa).

Asparagine 9 is a Mg(2+) binding site. Lysine 16 lines the ATP pocket. Residue arginine 89 coordinates substrate. Catalysis depends on aspartate 146, which acts as the Proton donor/acceptor. ATP contacts are provided by residues 206-210, 281-283, and 329-333; these read HLGNG, DCR, and GIGEN. Position 384 (glutamate 384) interacts with Mg(2+).

It belongs to the acetokinase family. As to quaternary structure, homodimer. Mg(2+) is required as a cofactor. Mn(2+) serves as cofactor.

The protein localises to the cytoplasm. The catalysed reaction is acetate + ATP = acetyl phosphate + ADP. It participates in metabolic intermediate biosynthesis; acetyl-CoA biosynthesis; acetyl-CoA from acetate: step 1/2. Catalyzes the formation of acetyl phosphate from acetate and ATP. Can also catalyze the reverse reaction. The protein is Acetate kinase 1 of Photobacterium profundum (strain SS9).